The sequence spans 312 residues: Ribosomal protein L11 methyltransferase (312 aa).

S-adenosyl-L-methionine is bound by residues threonine 164, glycine 185, aspartate 207, and asparagine 249.

Belongs to the methyltransferase superfamily. PrmA family.

The protein resides in the cytoplasm. The catalysed reaction is L-lysyl-[protein] + 3 S-adenosyl-L-methionine = N(6),N(6),N(6)-trimethyl-L-lysyl-[protein] + 3 S-adenosyl-L-homocysteine + 3 H(+). Methylates ribosomal protein L11. The protein is Ribosomal protein L11 methyltransferase of Clostridium novyi (strain NT).